A 187-amino-acid chain; its full sequence is Large ribosomal subunit protein uL6 (187 aa).

The interval 159-187 is disordered; that stretch reads PYKGKGIRYKGEQLSSNPERLQVRSKEVR.

Belongs to the universal ribosomal protein uL6 family. Part of the 50S ribosomal subunit.

Its function is as follows. This protein binds to the 23S rRNA, and is important in its secondary structure. It is located near the subunit interface in the base of the L7/L12 stalk, and near the tRNA binding site of the peptidyltransferase center. This chain is Large ribosomal subunit protein uL6, found in Aquifex pyrophilus.